Reading from the N-terminus, the 210-residue chain is Menaquinone reductase, multiheme cytochrome c subunit (210 aa).

Residues 20–40 (GGAAPFFVGLVVALVFGWWAF) traverse the membrane as a helical segment. Positions 67, 70, 71, 88, 91, 92, 140, 143, 144, 152, 155, 156, 186, 189, 190, 205, 208, and 209 each coordinate heme.

It belongs to the multiheme cytochrome c family. In terms of assembly, the Qrc complex is composed of four subunits: QrcA, QrcB, QrcC and QrcD. Can form a supercomplex with the [NiFe] hydrogenase HynA1 and the tetraheme Type I cytochrome c3 TpIc(3), its physiological electron donors. It depends on heme c as a cofactor.

The protein localises to the cell inner membrane. Functionally, component of the respiratory Qrc complex, that catalyzes the reduction of the menaquinone pool using electrons transferred from the reduced periplasmic cytochrome c3, and which is probably involved in sulfate respiration. Is likely essential for growth on H(2) or formate since the periplasmic hydrogenases and/or formate dehydrogenases act as primary electron donors for the Qrc complex. This is Menaquinone reductase, multiheme cytochrome c subunit from Nitratidesulfovibrio vulgaris (strain ATCC 29579 / DSM 644 / CCUG 34227 / NCIMB 8303 / VKM B-1760 / Hildenborough) (Desulfovibrio vulgaris).